The sequence spans 75 residues: MSGLEIMVLTLLLLVSMATSHQDGGEKQATQRDAINVRRRSITRTEACYEYCKEQNKTCCGISNGRPICVGGCIR.

The N-terminal stretch at 1–20 (MSGLEIMVLTLLLLVSMATS) is a signal peptide. Positions 21–44 (HQDGGEKQATQRDAINVRRRSITR) are excised as a propeptide. 3 disulfides stabilise this stretch: C48/C60, C52/C69, and C59/C73.

This sequence belongs to the conotoxin O3 superfamily. In terms of tissue distribution, expressed by the venom duct.

The protein resides in the secreted. This Conus ventricosus (Mediterranean cone) protein is Conotoxin VnMSGL-0111.